A 274-amino-acid chain; its full sequence is MPVVKTKPTSPGRRHVVAVTNPSLHKGAPLASLTEKKRKNGGRNNAGRITVRHQGGGHKQLYRVIDFKRTKDGIPAVVERLEYDPNRTAHIALLKYADGERRYIIAPKGVSVGDAIASGQEAPIRVGSCLPLRNIPVGSVVHCIEMKPGKGAQIARSAGASAQVVAREGAYATIRLRSGEMRKVLVECRATLGEVSNSENNLRVYGKAGAKRWRGVRPTVRGTAMNPVDHPHGGGEGRNFGKHPVTPWGVPTKGYKTRKNKRTDKMIVRRRKAK.

The interval 221–256 (RGTAMNPVDHPHGGGEGRNFGKHPVTPWGVPTKGYK) is disordered.

This sequence belongs to the universal ribosomal protein uL2 family. Part of the 50S ribosomal subunit. Forms a bridge to the 30S subunit in the 70S ribosome.

Functionally, one of the primary rRNA binding proteins. Required for association of the 30S and 50S subunits to form the 70S ribosome, for tRNA binding and peptide bond formation. It has been suggested to have peptidyltransferase activity; this is somewhat controversial. Makes several contacts with the 16S rRNA in the 70S ribosome. This Hahella chejuensis (strain KCTC 2396) protein is Large ribosomal subunit protein uL2.